The chain runs to 373 residues: Spermidine/putrescine import ATP-binding protein PotA (373 aa).

Residues 11 to 241 (IELRSLKKSY…PSNLFVAKFI (231 aa)) form the ABC transporter domain. 43–50 (GPSGCGKT) is a binding site for ATP.

It belongs to the ABC transporter superfamily. Spermidine/putrescine importer (TC 3.A.1.11.1) family. In terms of assembly, the complex is composed of two ATP-binding proteins (PotA), two transmembrane proteins (PotB and PotC) and a solute-binding protein (PotD).

It is found in the cell inner membrane. The enzyme catalyses ATP + H2O + polyamine-[polyamine-binding protein]Side 1 = ADP + phosphate + polyamineSide 2 + [polyamine-binding protein]Side 1.. Part of the ABC transporter complex PotABCD involved in spermidine/putrescine import. Responsible for energy coupling to the transport system. This is Spermidine/putrescine import ATP-binding protein PotA from Mannheimia succiniciproducens (strain KCTC 0769BP / MBEL55E).